The sequence spans 440 residues: 6-phospho-alpha-glucosidase (440 aa).

4-70 lines the NAD(+) pocket; it reads FSVVIAGGGS…PEIEFSYTTD (67 aa). Substrate is bound by residues Arg93 and Asn147. Cys169 contributes to the Mn(2+) binding site. Residue Asp170 is the Proton donor of the active site. Mn(2+) is bound at residue His200. The active-site Proton acceptor is Tyr263. Residue Arg283 coordinates substrate.

As to quaternary structure, homodimer. NAD(+) serves as cofactor. It depends on Mn(2+) as a cofactor. Requires Co(2+) as cofactor. The cofactor is Ni(2+).

The enzyme catalyses alpha-maltose 6'-phosphate + H2O = D-glucose 6-phosphate + D-glucose. It functions in the pathway glycan biosynthesis; sucrose metabolism. In terms of biological role, is involved in the catabolism of alpha-glycosides accumulated via a phosphoenolpyruvate-dependent phosphotransferase system (PEP-PTS). Hydrolyzes a wide variety of 6-phospho-alpha-D-glucosides including maltose-6'-phosphate, isomaltose-6'-phosphate, maltitol-6-phosphate, trehalose-6-phosphate and the 6'-phosphorylated derivatives of the five linkage-isomeric alpha-D-glucosyl-D-fructoses: trehalulose-6'-phosphate, turanose-6'-phosphate, maltulose-6'-phosphate, leucrose-6'-phosphate, and palatinose-6'-phosphate. However, sucrose-6-phosphate is not a substrate for this enzyme. In Klebsiella pneumoniae, this protein is 6-phospho-alpha-glucosidase.